The primary structure comprises 602 residues: MEWDKDRIRNFCIIAHIDHGKSTLADRLLEYTGALTGREMTEQVLDQMDLERERGITIKMQAVRLNYRARDGRDYQLNLIDTPGHVDFSYEVSRSLAACEGALLVVDAAQGIEAQTLANVYLALEHNLEIIPVINKIDLPSADPERVKKEIEDVIGLDASEAVLASAKSGAGVEEILERIVTRIPPPGGQTGAPLRALIFDSHYDPYKGVVCYVRVVDGSVSNGMQIKMMATGREFEVSEVGIFKPYLASVGELRTGEVGFITAGIKNVKDSRVGDTITEAGRPAPVPLPGYRKATPMVFCGLYPVEAGEYEALKDALAKLKLNDASLTYEPETSEALGFGFRCGFLGLLHMEIIQERLEREYGLNLITTAPNVVYRVKTTAGETIEIENPSKLPPPGKIEFIEEPFVRAVIMAPKDYIGPVMELCQERRGVFTNMEYISVNRVMLNYALPLSEIIYDFFDQLKSRTKGYASLDYELDGYRQSDLVKLDVLIAGEVLDALSVIVHRDKAYQRGRHLVEKLRGLIPRHLFEIPIQAAVGNRIIARETVKAIRKDVLAKCYGGDVTRKRKLLEKQKAGKKRMKQVGRVEIPQEAFMAVLSVGDK.

The tr-type G domain occupies 6-188 (DRIRNFCIIA…RIVTRIPPPG (183 aa)). GTP contacts are provided by residues 18-23 (DHGKST) and 135-138 (NKID).

This sequence belongs to the TRAFAC class translation factor GTPase superfamily. Classic translation factor GTPase family. LepA subfamily.

It localises to the cell membrane. The catalysed reaction is GTP + H2O = GDP + phosphate + H(+). Its function is as follows. Required for accurate and efficient protein synthesis under certain stress conditions. May act as a fidelity factor of the translation reaction, by catalyzing a one-codon backward translocation of tRNAs on improperly translocated ribosomes. Back-translocation proceeds from a post-translocation (POST) complex to a pre-translocation (PRE) complex, thus giving elongation factor G a second chance to translocate the tRNAs correctly. Binds to ribosomes in a GTP-dependent manner. The polypeptide is Elongation factor 4 (Pelotomaculum thermopropionicum (strain DSM 13744 / JCM 10971 / SI)).